The chain runs to 294 residues: Nucleotide-binding protein NT01CX_1284 (294 aa).

8–15 contacts ATP; sequence GLSGAGKS. 59–62 serves as a coordination point for GTP; that stretch reads DIRG.

This sequence belongs to the RapZ-like family.

Displays ATPase and GTPase activities. The protein is Nucleotide-binding protein NT01CX_1284 of Clostridium novyi (strain NT).